Here is a 415-residue protein sequence, read N- to C-terminus: Extracellular signal-regulated kinase 1 (415 aa).

In terms of domain architecture, Protein kinase spans 66–369 (YQILEIVGEG…VEDALKHPYL (304 aa)). ATP-binding positions include 72–80 (VGEGAYGIV) and Lys-95. Residue Asp-190 is the Proton acceptor of the active site. Thr-226 bears the Phosphothreonine mark. A TXY motif is present at residues 226–228 (TEY). Tyr-228 is modified (phosphotyrosine).

Belongs to the protein kinase superfamily. CMGC Ser/Thr protein kinase family. MAP kinase subfamily. Requires Mg(2+) as cofactor. In terms of processing, dually phosphorylated on Thr-226 and Tyr-228, which activates the enzyme.

The catalysed reaction is L-seryl-[protein] + ATP = O-phospho-L-seryl-[protein] + ADP + H(+). It carries out the reaction L-threonyl-[protein] + ATP = O-phospho-L-threonyl-[protein] + ADP + H(+). Its activity is regulated as follows. Activated by tyrosine and threonine phosphorylation. This chain is Extracellular signal-regulated kinase 1 (CEK1), found in Candida albicans (strain WO-1) (Yeast).